Reading from the N-terminus, the 279-residue chain is Energy-coupling factor transporter ATP-binding protein EcfA1 (279 aa).

One can recognise an ABC transporter domain in the interval 6–240 (ISVDHLTYQY…GTQLVEMGLD (235 aa)). 40–47 (GHNGSGKS) provides a ligand contact to ATP.

This sequence belongs to the ABC transporter superfamily. Energy-coupling factor EcfA family. Forms a stable energy-coupling factor (ECF) transporter complex composed of 2 membrane-embedded substrate-binding proteins (S component), 2 ATP-binding proteins (A component) and 2 transmembrane proteins (T component).

The protein resides in the cell membrane. Functionally, ATP-binding (A) component of a common energy-coupling factor (ECF) ABC-transporter complex. Unlike classic ABC transporters this ECF transporter provides the energy necessary to transport a number of different substrates. The sequence is that of Energy-coupling factor transporter ATP-binding protein EcfA1 from Levilactobacillus brevis (strain ATCC 367 / BCRC 12310 / CIP 105137 / JCM 1170 / LMG 11437 / NCIMB 947 / NCTC 947) (Lactobacillus brevis).